Here is a 59-residue protein sequence, read N- to C-terminus: Temperature acclimation protein A (59 aa).

A CSD domain is found at 1–55; it reads FNDEKGFGFITPESGPDLFVHFRAIQGNGFKSLKEGQKVTFIAVQGQKGMQADKV.

The protein resides in the cytoplasm. Functionally, affects cell viability at low temperatures. The chain is Temperature acclimation protein A (tapA) from Pseudomonas fragi.